Consider the following 96-residue polypeptide: MSNIRPLHDRVVIRRVEEETKTAGGILLPGSAAEKPSQGEVIAVGNGQITDNGVRALDVKVGDKVLFGTYAGTTVKVNGEELLIMKESDILAVLEG.

This sequence belongs to the GroES chaperonin family. As to quaternary structure, heptamer of 7 subunits arranged in a ring. Interacts with the chaperonin GroEL.

Its subcellular location is the cytoplasm. Functionally, together with the chaperonin GroEL, plays an essential role in assisting protein folding. The GroEL-GroES system forms a nano-cage that allows encapsulation of the non-native substrate proteins and provides a physical environment optimized to promote and accelerate protein folding. GroES binds to the apical surface of the GroEL ring, thereby capping the opening of the GroEL channel. The sequence is that of Co-chaperonin GroES from Acinetobacter baumannii (strain AB307-0294).